A 555-amino-acid chain; its full sequence is Probable apyrase 6 (555 aa).

Over residues 1 to 10 (MRRSHARSRV) the composition is skewed to basic residues. The interval 1–45 (MRRSHARSRVKNSSSSKSDMDPIKFQIRSGNRAPSSSSTYTLTKP) is disordered. Topologically, residues 1–55 (MRRSHARSRVKNSSSSKSDMDPIKFQIRSGNRAPSSSSTYTLTKPNSKHAKSNLL) are cytoplasmic. Residues 28 to 45 (RSGNRAPSSSSTYTLTKP) are compositionally biased toward polar residues. A helical transmembrane segment spans residues 56 to 76 (LTVGSISVVLGVLFLCYSILF). Topologically, residues 77–512 (SGGNLRGSLR…HALFSNHPKT (436 aa)) are extracellular. 89–99 (VVIDGGSTGTR) lines the ATP pocket. E212 functions as the Proton acceptor in the catalytic mechanism. 236–246 (GIVELGGASAQ) is an ATP binding site. N-linked (GlcNAc...) asparagine glycans are attached at residues N267 and N348. Residues 513-533 (LHYLIGIPILMTVLVYLVTKW) form a helical membrane-spanning segment. At 534 to 555 (RKPQLKTIYDLEKGRYIVTRIR) the chain is on the cytoplasmic side.

The protein belongs to the GDA1/CD39 NTPase family. Requires Ca(2+) as cofactor. Detected in mature pollen grains (at the protein level). Also expressed in the veins and hydathode regions of rosette leaves.

It localises to the cytoplasmic vesicle membrane. The enzyme catalyses a ribonucleoside 5'-triphosphate + 2 H2O = a ribonucleoside 5'-phosphate + 2 phosphate + 2 H(+). In terms of biological role, catalyzes the hydrolysis of phosphoanhydride bonds of nucleoside tri- and di-phosphates. Involved in the regulation of pollen and anther development. This chain is Probable apyrase 6 (APY6), found in Arabidopsis thaliana (Mouse-ear cress).